We begin with the raw amino-acid sequence, 321 residues long: Anther-specific protein TA-29 (321 aa).

Positions 301–321 (RSDEEEAHHQSKQHKDEDIIN) are disordered.

In terms of tissue distribution, anther specific (tapetal cells).

The chain is Anther-specific protein TA-29 (TA-29) from Nicotiana tabacum (Common tobacco).